The following is a 274-amino-acid chain: Rhamnulose-1-phosphate aldolase (274 aa).

Glutamate 117 is a catalytic residue. Residues histidine 141, histidine 143, and histidine 212 each contribute to the Zn(2+) site.

The protein belongs to the aldolase class II family. RhaD subfamily. Homotetramer. It depends on Zn(2+) as a cofactor.

The protein localises to the cytoplasm. It catalyses the reaction L-rhamnulose 1-phosphate = (S)-lactaldehyde + dihydroxyacetone phosphate. Its pathway is carbohydrate degradation; L-rhamnose degradation; glycerone phosphate from L-rhamnose: step 3/3. Catalyzes the reversible cleavage of L-rhamnulose-1-phosphate to dihydroxyacetone phosphate (DHAP) and L-lactaldehyde. This Shigella dysenteriae serotype 1 (strain Sd197) protein is Rhamnulose-1-phosphate aldolase.